Reading from the N-terminus, the 410-residue chain is 3-phosphoshikimate 1-carboxyvinyltransferase (410 aa).

3-phosphoshikimate is bound by residues lysine 21, serine 22, and arginine 26. Lysine 21 is a binding site for phosphoenolpyruvate. Residues glycine 69 and arginine 97 each coordinate phosphoenolpyruvate. 6 residues coordinate 3-phosphoshikimate: serine 143, serine 144, glutamine 145, serine 171, aspartate 288, and lysine 315. Residue glutamine 145 participates in phosphoenolpyruvate binding. Catalysis depends on aspartate 288, which acts as the Proton acceptor. Phosphoenolpyruvate contacts are provided by arginine 319, arginine 364, and lysine 389.

Belongs to the EPSP synthase family. Monomer.

Its subcellular location is the cytoplasm. It catalyses the reaction 3-phosphoshikimate + phosphoenolpyruvate = 5-O-(1-carboxyvinyl)-3-phosphoshikimate + phosphate. It functions in the pathway metabolic intermediate biosynthesis; chorismate biosynthesis; chorismate from D-erythrose 4-phosphate and phosphoenolpyruvate: step 6/7. In terms of biological role, catalyzes the transfer of the enolpyruvyl moiety of phosphoenolpyruvate (PEP) to the 5-hydroxyl of shikimate-3-phosphate (S3P) to produce enolpyruvyl shikimate-3-phosphate and inorganic phosphate. The sequence is that of 3-phosphoshikimate 1-carboxyvinyltransferase from Bacteroides fragilis (strain ATCC 25285 / DSM 2151 / CCUG 4856 / JCM 11019 / LMG 10263 / NCTC 9343 / Onslow / VPI 2553 / EN-2).